Reading from the N-terminus, the 339-residue chain is Dehydrogenase/reductase SDR family member 7 (339 aa).

Positions 1–28 are cleaved as a signal peptide; sequence MNWELLLWLLVLCALLLLLVQLLRFLRA. S60 and I62 together coordinate NAD(+). Position 190 (S190) interacts with substrate. NAD(+) is bound by residues Y203, K207, and S239. Y203 acts as the Proton acceptor in catalysis.

Belongs to the short-chain dehydrogenases/reductases (SDR) family. As to expression, found predominantly in the adrenal glands, liver, thyroid, prostate, small intestine, colon, stomach, kidney and brain. Lower levels observed in skeletal muscle, the lung and the spleen.

It localises to the endoplasmic reticulum membrane. The enzyme catalyses all-trans-retinol + NADP(+) = all-trans-retinal + NADPH + H(+). The catalysed reaction is 5alpha-androstane-3alpha,17beta-diol + NADP(+) = 17beta-hydroxy-5alpha-androstan-3-one + NADPH + H(+). Functionally, NADPH-dependent oxidoreductase which catalyzes the reduction of a variety of compounds bearing carbonyl groups including steroids, retinoids and xenobiotics. Catalyzes the reduction/inactivation of 5alpha-dihydrotestosterone to 3alpha-androstanediol, with a possible role in the modulation of androgen receptor function. Involved in the reduction of all-trans-retinal to all-trans-retinol. Converts cortisone to 20beta-dihydrocortisone in vitro, although the physiological relevance of this activity is questionable. Reduces exogenous compounds such as quinones (1,2-naphtoquinone, 9,10-phenantrenequinone and benzoquinone) and other xenobiotics (alpha-diketones) in vitro, suggesting a role in the biotransformation of xenobiotics with carbonyl group. A dehydrogenase activity has not been detected so far. May play a role as tumor suppressor. This Homo sapiens (Human) protein is Dehydrogenase/reductase SDR family member 7.